The sequence spans 391 residues: Elongation factor Tu (391 aa).

The region spanning 10 to 201 is the tr-type G domain; that stretch reads KPHVNIGTIG…EVDNYIPTPE (192 aa). Residues 19–26 form a G1 region; it reads GHVDHGKT. Position 19-26 (19-26) interacts with GTP; it reads GHVDHGKT. Thr26 lines the Mg(2+) pocket. The interval 55–59 is G2; that stretch reads GITIS. The G3 stretch occupies residues 76 to 79; it reads DCPG. GTP contacts are provided by residues 76-80 and 131-134; these read DCPGH and NKVD. A G4 region spans residues 131–134; the sequence is NKVD. The interval 169-171 is G5; sequence SAL.

The protein belongs to the TRAFAC class translation factor GTPase superfamily. Classic translation factor GTPase family. EF-Tu/EF-1A subfamily. Monomer.

It is found in the cytoplasm. The catalysed reaction is GTP + H2O = GDP + phosphate + H(+). GTP hydrolase that promotes the GTP-dependent binding of aminoacyl-tRNA to the A-site of ribosomes during protein biosynthesis. The sequence is that of Elongation factor Tu from Bartonella henselae (strain ATCC 49882 / DSM 28221 / CCUG 30454 / Houston 1) (Rochalimaea henselae).